The following is a 409-amino-acid chain: uncharacterized protein (409 aa).

A signal peptide spans 1-39 (MVSDSKLELPLPVNQQKPRRRRILKVHLLIAALILSAVG). The Zn(2+) site is built by His67, Asp69, Glu181, His250, and His271.

The protein belongs to the metallo-dependent hydrolases superfamily. Peptidase M19 family. Interacts with dil1. Zn(2+) is required as a cofactor.

It catalyses the reaction an L-aminoacyl-L-amino acid + H2O = 2 an L-alpha-amino acid. This is an uncharacterized protein from Schizosaccharomyces pombe (strain 972 / ATCC 24843) (Fission yeast).